The sequence spans 1327 residues: uncharacterized protein (1327 aa).

884-885 (WD) is a binding site for substrate. The Proton donor role is filled by glutamate 1023. Position 1143-1144 (1143-1144 (KQ)) interacts with substrate.

This sequence in the N-terminal section; belongs to the trehalose phosphatase family. The protein in the C-terminal section; belongs to the glycosyl hydrolase 65 family.

This is an uncharacterized protein from Mycobacterium tuberculosis (strain CDC 1551 / Oshkosh).